The chain runs to 442 residues: Matrix remodeling-associated protein 8 (442 aa).

The first 19 residues, 1 to 19 (MELLSRVLLWKLLLLQSSA), serve as a signal peptide directing secretion. Topologically, residues 20–340 (VLSSGPSGTA…PEDHTHFFQQ (321 aa)) are extracellular. Ig-like V-type domains are found at residues 25–156 (PSGT…LEVT) and 159–291 (PLLS…LQVT). 2 disulfide bridges follow: Cys-53–Cys-136 and Cys-185–Cys-271. Asn-118 carries an N-linked (GlcNAc...) asparagine glycan. The RGD 1 signature appears at 128-130 (RGD). A Phosphoserine modification is found at Ser-227. An RGD 2 motif is present at residues 251-253 (RGD). The disordered stretch occupies residues 296–319 (EPPARASPGNGSGHSSAPSPDPTL). Asn-305 carries an N-linked (GlcNAc...) asparagine glycan. The chain crosses the membrane as a helical span at residues 341 to 361 (LGYVLATLLLFILLLITVVLA). At 362-442 (TRYRHSGGCK…DKEFRKEYCK (81 aa)) the chain is on the cytoplasmic side.

As to quaternary structure, homodimer in cis. Does not appear to form trans-homodimers. Interacts with ITGB3; the interaction inhibits ITGAV:ITGB3 heterodimer formation. In terms of tissue distribution, widely expressed (at protein level). Highly expressed in brain where it localizes to the glia limitans, which is formed by the endfeet of astrocytes surrounding capillaries, and beneath the pia mater (at protein level). In lung, detected in epithelial cells of the bronchus (at protein level). Expressed in intercalated disks in the heart (at protein level). Detected in pancreatic alpha-cells in the islet of Langerhans (at protein level). In kidney, found in the brush border of the proximal convoluted tubule (at protein level). Expressed in the epithelium of the small intestine (at protein level). Weakly expressed in liver (at protein level). Detected in myeloid cells.

The protein resides in the cell membrane. Its subcellular location is the cell junction. It localises to the tight junction. It is found in the cytoplasm. The protein localises to the cell projection. The protein resides in the cilium membrane. Its subcellular location is the nucleus. Its function is as follows. Transmembrane protein which can modulate activity of various signaling pathways, probably via binding to integrin ITGAV:ITGB3. Mediates heterophilic cell-cell interactions in vitro. Inhibits osteoclastogenesis downstream of TNFSF11/RANKL and CSF1, where it may function by attenuating signaling via integrin ITGB3 and MAP kinase p38. Plays a role in cartilage formation where it promotes proliferation and maturation of growth plate chondrocytes. Stimulates formation of primary cilia in chondrocytes. Enhances expression of genes involved in the hedgehog signaling pathway in chondrocytes, including the hedgehog signaling molecule IHH; may also promote signaling via the PTHLH/PTHrP pathway. Plays a role in angiogenesis where it suppresses migration of endothelial cells and also promotes their apoptosis. Inhibits VEGF-induced activation of AKT and p38 MAP kinase in endothelial cells. Also inhibits VTN (vitronectin)-mediated integrin ITGAV:ITGB3 signaling and activation of PTK2/FAK. May play a role in the maturation and maintenance of the blood-brain barrier. The polypeptide is Matrix remodeling-associated protein 8 (Mus musculus (Mouse)).